The primary structure comprises 327 residues: DNA-directed RNA polymerase subunit alpha (327 aa).

The segment at 1 to 233 (MQGSVTEFLK…EQLEAFVDLR (233 aa)) is alpha N-terminal domain (alpha-NTD). Positions 247 to 327 (FDPVLLRPVD…NWPPLGFIDK (81 aa)) are alpha C-terminal domain (alpha-CTD).

The protein belongs to the RNA polymerase alpha chain family. As to quaternary structure, homodimer. The RNAP catalytic core consists of 2 alpha, 1 beta, 1 beta' and 1 omega subunit. When a sigma factor is associated with the core the holoenzyme is formed, which can initiate transcription.

The enzyme catalyses RNA(n) + a ribonucleoside 5'-triphosphate = RNA(n+1) + diphosphate. Functionally, DNA-dependent RNA polymerase catalyzes the transcription of DNA into RNA using the four ribonucleoside triphosphates as substrates. This chain is DNA-directed RNA polymerase subunit alpha, found in Baumannia cicadellinicola subsp. Homalodisca coagulata.